We begin with the raw amino-acid sequence, 148 residues long: Ubiquitin-conjugating enzyme E2 13 (148 aa).

One can recognise a UBC core domain in the interval 2-148 (ALPKRIIKEI…AREWTKKYAV (147 aa)). Catalysis depends on Cys-86, which acts as the Glycyl thioester intermediate.

It belongs to the ubiquitin-conjugating enzyme family. Heterodimer with spm2.

The catalysed reaction is S-ubiquitinyl-[E1 ubiquitin-activating enzyme]-L-cysteine + [E2 ubiquitin-conjugating enzyme]-L-cysteine = [E1 ubiquitin-activating enzyme]-L-cysteine + S-ubiquitinyl-[E2 ubiquitin-conjugating enzyme]-L-cysteine.. It participates in protein modification; protein ubiquitination. Its function is as follows. Has a role in the DNA error-free postreplication repair (PRR) pathway. The ubc13/spm2 heterodimer catalyzes the synthesis of non-canonical poly-ubiquitin chains that are linked through 'Lys-63'. The polypeptide is Ubiquitin-conjugating enzyme E2 13 (ubc13) (Schizosaccharomyces pombe (strain 972 / ATCC 24843) (Fission yeast)).